A 374-amino-acid chain; its full sequence is uncharacterized protein (374 aa).

Residues 298–332 adopt a coiled-coil conformation; it reads TKEKLLKLHSEQKSLSEKINKLSGEKDIEQSMINN.

This is an uncharacterized protein from Acanthamoeba polyphaga (Amoeba).